We begin with the raw amino-acid sequence, 394 residues long: Chalcone synthase 8 (394 aa).

Cys-165 is an active-site residue.

The protein belongs to the thiolase-like superfamily. Chalcone/stilbene synthases family.

It catalyses the reaction (E)-4-coumaroyl-CoA + 3 malonyl-CoA + 3 H(+) = 2',4,4',6'-tetrahydroxychalcone + 3 CO2 + 4 CoA. Its pathway is secondary metabolite biosynthesis; flavonoid biosynthesis. The primary product of this enzyme is 4,2',4',6'-tetrahydroxychalcone (also termed naringenin-chalcone or chalcone) which can under specific conditions spontaneously isomerize into naringenin. In Bromheadia finlaysoniana (Orchid), this protein is Chalcone synthase 8 (CHS8).